Reading from the N-terminus, the 200-residue chain is NAD(P)H dehydrogenase (quinone) (200 aa).

Residues 4–190 (VLVLYYSTYG…EGARFQGRHV (187 aa)) enclose the Flavodoxin-like domain. FMN-binding positions include 10–15 (STYGHV) and 78–80 (TRY). Tyr-12 lines the NAD(+) pocket. Trp-98 contacts substrate. FMN is bound by residues 113-119 (STASQHG) and His-134.

It belongs to the WrbA family. Requires FMN as cofactor.

It carries out the reaction a quinone + NADH + H(+) = a quinol + NAD(+). The catalysed reaction is a quinone + NADPH + H(+) = a quinol + NADP(+). The polypeptide is NAD(P)H dehydrogenase (quinone) (Methylobacterium radiotolerans (strain ATCC 27329 / DSM 1819 / JCM 2831 / NBRC 15690 / NCIMB 10815 / 0-1)).